We begin with the raw amino-acid sequence, 390 residues long: MKSFLVDQDGYYGEFGGAYVPEILHKCVEELQNTYLDVIESEDFKKEFDQLLRDYVGRPSPLYPARRLSEKYGCKMYLKREDLNHTGAHKINNTIGQILLARRMGKKRIIAETGAGQHGVATATVCALMNMECIVYMGKTDVERQHINVEKMKMLGATVVPVTSGNMTLKDATNEAIRDWCCHPSDTYYIIGSTVGPHPYPDMVARLQSVISEEIKKQLQEKEGRDYPDYLIACVGGGSNAAGTIYHYIDDERVRIVLAEAGGKGIETGMTAATIQLGKMGIIHGARTFVIQNEDGQIEEPYSISAGLDYPGIGPMHANLADKKRAMVLAVNDDEAIRAAYELTRLEGIIPALESAHALGALEKITFKPEDVVVLTVSGRGDKDIETYLG.

Residue lysine 90 is modified to N6-(pyridoxal phosphate)lysine.

The protein belongs to the TrpB family. As to quaternary structure, tetramer of two alpha and two beta chains. Requires pyridoxal 5'-phosphate as cofactor.

It catalyses the reaction (1S,2R)-1-C-(indol-3-yl)glycerol 3-phosphate + L-serine = D-glyceraldehyde 3-phosphate + L-tryptophan + H2O. The protein operates within amino-acid biosynthesis; L-tryptophan biosynthesis; L-tryptophan from chorismate: step 5/5. The beta subunit is responsible for the synthesis of L-tryptophan from indole and L-serine. In Bacteroides fragilis (strain ATCC 25285 / DSM 2151 / CCUG 4856 / JCM 11019 / LMG 10263 / NCTC 9343 / Onslow / VPI 2553 / EN-2), this protein is Tryptophan synthase beta chain.